The sequence spans 492 residues: Trypanothione reductase (492 aa).

36–52 (DVQMVHGPPFFSALGGT) is an FAD binding site. Residues cysteine 53 and cysteine 58 are joined by a disulfide bond. Histidine 461 serves as the catalytic Proton acceptor.

It belongs to the class-I pyridine nucleotide-disulfide oxidoreductase family. In terms of assembly, homodimer. It depends on FAD as a cofactor.

The protein resides in the cytoplasm. It carries out the reaction trypanothione + NADP(+) = trypanothione disulfide + NADPH + H(+). In terms of biological role, trypanothione is the parasite analog of glutathione; this enzyme is the equivalent of glutathione reductase. The protein is Trypanothione reductase (TPR) of Trypanosoma cruzi.